Here is a 254-residue protein sequence, read N- to C-terminus: tRNA (guanine-N(7)-)-methyltransferase (254 aa).

Residues 1-34 form a disordered region; it reads MNTNTPAHPPEGAPLSEATQAALASAEHAPDSPG. S-adenosyl-L-methionine is bound by residues Glu-87, Glu-112, Asp-139, and Asp-162. Asp-162 is a catalytic residue. Residues Lys-166, Asp-198, and 233 to 236 contribute to the substrate site; that span reads TKFE.

This sequence belongs to the class I-like SAM-binding methyltransferase superfamily. TrmB family.

The enzyme catalyses guanosine(46) in tRNA + S-adenosyl-L-methionine = N(7)-methylguanosine(46) in tRNA + S-adenosyl-L-homocysteine. It functions in the pathway tRNA modification; N(7)-methylguanine-tRNA biosynthesis. Functionally, catalyzes the formation of N(7)-methylguanine at position 46 (m7G46) in tRNA. This is tRNA (guanine-N(7)-)-methyltransferase from Bordetella pertussis (strain Tohama I / ATCC BAA-589 / NCTC 13251).